The sequence spans 211 residues: MKRRDTIVRYTAPERINHWITAFCFILAAVSGLGFLFPSFNWLMQIMGTPQLARILHPFVGVVMFASFIIMFFRYWHHNLINRDDIFWAKNIRKIVVNEEVGDTGRYNFGQKCVFWAAIIFLVLLLVSGVIIWRPYFAPAFSIPVIRFALMLHSFAAVALIVVIMVHIYAALWVKGTITAMVEGWVTSAWAKKHHPRWYREVRKTTEKKAE.

Residues 1-17 (MKRRDTIVRYTAPERIN) are Cytoplasmic-facing. Residue histidine 18 coordinates heme b. The helical transmembrane segment at 18 to 32 (HWITAFCFILAAVSG) threads the bilayer. Residues 33-53 (LGFLFPSFNWLMQIMGTPQLA) lie on the Periplasmic side of the membrane. The helical transmembrane segment at 54-72 (RILHPFVGVVMFASFIIMF) threads the bilayer. Histidine 57 serves as a coordination point for heme b. Topologically, residues 73-112 (FRYWHHNLINRDDIFWAKNIRKIVVNEEVGDTGRYNFGQK) are cytoplasmic. The chain crosses the membrane as a helical span at residues 113 to 130 (CVFWAAIIFLVLLLVSGV). The Periplasmic segment spans residues 131–151 (IIWRPYFAPAFSIPVIRFALM). A helical membrane pass occupies residues 152–170 (LHSFAAVALIVVIMVHIYA). 2 residues coordinate heme b: histidine 153 and histidine 167. The Cytoplasmic segment spans residues 171–211 (ALWVKGTITAMVEGWVTSAWAKKHHPRWYREVRKTTEKKAE).

This sequence belongs to the formate dehydrogenase gamma subunit family. As to quaternary structure, formate dehydrogenase is a membrane-bound complex, formed by subunits alpha, beta and gamma. It depends on heme as a cofactor.

The protein resides in the cell inner membrane. Allows to use formate as major electron donor during aerobic respiration. Subunit gamma is probably the cytochrome b556(FDO) component of the formate dehydrogenase. In Escherichia coli O157:H7, this protein is Formate dehydrogenase, cytochrome b556(fdo) subunit (fdoI).